The following is a 183-amino-acid chain: UPF0316 protein GTNG_0803 (183 aa).

The next 3 membrane-spanning stretches (helical) occupy residues 5–25 (IVLV…RTIF), 33–53 (LAAF…SIVF), and 59–79 (YIVM…LEDI).

It belongs to the UPF0316 family.

The protein localises to the cell membrane. The protein is UPF0316 protein GTNG_0803 of Geobacillus thermodenitrificans (strain NG80-2).